Reading from the N-terminus, the 189-residue chain is Thioredoxin-like protein CITRX, chloroplastic (189 aa).

Residues 1–36 (MAMAAAASLLPACAAPTLPGRAFRPRRNSTPTASLS) constitute a chloroplast transit peptide. The Thioredoxin domain occupies 72-189 (GSGKYIAPDY…MIRNIIDNEL (118 aa)). Catalysis depends on nucleophile residues cysteine 112 and cysteine 115. Cysteine 112 and cysteine 115 form a disulfide bridge.

Belongs to the thioredoxin family. Plant CITRX-type subfamily.

Its subcellular location is the plastid. It localises to the chloroplast. Functionally, probable thiol-disulfide oxidoreductase that may play a role in proper chloroplast development. This chain is Thioredoxin-like protein CITRX, chloroplastic, found in Oryza sativa subsp. indica (Rice).